Reading from the N-terminus, the 310-residue chain is Porphobilinogen deaminase (310 aa).

At Cys242 the chain carries S-(dipyrrolylmethanemethyl)cysteine.

This sequence belongs to the HMBS family. As to quaternary structure, monomer. Dipyrromethane serves as cofactor.

It carries out the reaction 4 porphobilinogen + H2O = hydroxymethylbilane + 4 NH4(+). It functions in the pathway porphyrin-containing compound metabolism; protoporphyrin-IX biosynthesis; coproporphyrinogen-III from 5-aminolevulinate: step 2/4. Functionally, tetrapolymerization of the monopyrrole PBG into the hydroxymethylbilane pre-uroporphyrinogen in several discrete steps. This Shewanella baltica (strain OS155 / ATCC BAA-1091) protein is Porphobilinogen deaminase.